A 308-amino-acid polypeptide reads, in one-letter code: Taste receptor type 2 member 107 (308 aa).

Topologically, residues Met1–Gly7 are extracellular. Residues Ile8–Ala28 traverse the membrane as a helical segment. The Cytoplasmic portion of the chain corresponds to Leu29–Lys43. A helical membrane pass occupies residues Ile44–Leu64. Residues Gln65–His94 lie on the Extracellular side of the membrane. Asn80 carries N-linked (GlcNAc...) asparagine glycosylation. The chain crosses the membrane as a helical span at residues Leu95 to Ser115. Residues Asn116 to Arg127 lie on the Cytoplasmic side of the membrane. The chain crosses the membrane as a helical span at residues Val128–Phe148. Residues Ser149–Asn180 are Extracellular-facing. 3 N-linked (GlcNAc...) asparagine glycosylation sites follow: Asn153, Asn161, and Asn175. Residues Leu181–Leu201 traverse the membrane as a helical segment. The Cytoplasmic segment spans residues Trp202–Ser232. A helical transmembrane segment spans residues Phe233–Leu253. Residues Pro254–Leu258 are Extracellular-facing. Residues Leu259–Ile279 form a helical membrane-spanning segment. Over Leu280–Thr308 the chain is Cytoplasmic.

This sequence belongs to the G-protein coupled receptor T2R family.

Its subcellular location is the membrane. In terms of biological role, putative taste receptor which may play a role in the perception of bitterness. In Rattus norvegicus (Rat), this protein is Taste receptor type 2 member 107.